We begin with the raw amino-acid sequence, 214 residues long: Thymidylate kinase (214 aa).

Position 13–20 (13–20) interacts with ATP; it reads GPDACGKS.

This sequence belongs to the thymidylate kinase family.

It catalyses the reaction dTMP + ATP = dTDP + ADP. Functionally, phosphorylation of dTMP to form dTDP in both de novo and salvage pathways of dTTP synthesis. This chain is Thymidylate kinase, found in Malacoplasma penetrans (strain HF-2) (Mycoplasma penetrans).